We begin with the raw amino-acid sequence, 405 residues long: Dynactin subunit 2 (405 aa).

A disordered region spans residues 1-24; sequence MADPKYANLPGIASNEPDVYETSD. 2 coiled-coil regions span residues 102 to 125 and 379 to 405; these read QQKY…IQTS and QQTM…KLNK.

It belongs to the dynactin subunit 2 family. Subunit of dynactin, a multiprotein complex part of a tripartite complex with dynein and a adapter, such as BICDL1, BICD2 or HOOK3. The dynactin complex is built around ACTR1A/ACTB filament and consists of an actin-related filament composed of a shoulder domain, a pointed end and a barbed end. Its length is defined by its flexible shoulder domain. The soulder is composed of 2 DCTN1 subunits, 4 DCTN2 and 2 DCTN3.

It localises to the cytoplasm. The protein resides in the cytoskeleton. Its subcellular location is the microtubule organizing center. It is found in the centrosome. The protein localises to the membrane. Part of the dynactin complex that activates the molecular motor dynein for ultra-processive transport along microtubules. In the dynactin soulder domain, binds the ACTR1A filament and acts as a molecular ruler to determine the length. Modulates cytoplasmic dynein binding to an organelle, and plays a role in prometaphase chromosome alignment and spindle organization during mitosis. Involved in anchoring microtubules to centrosomes. The chain is Dynactin subunit 2 (dctn2) from Danio rerio (Zebrafish).